The primary structure comprises 1050 residues: Elongation factor 3 (1050 aa).

Residues valine 43 and histidine 45 each coordinate ADP. The stretch at 46–83 (DVPVEFFEDLKKQIQSKDAKVSLAALDAYKHIASTNGL) is one HEAT 1 repeat. Position 86 (serine 86) interacts with ADP. HEAT repeat units follow at residues 89–126 (PYVV…AITP), 127–165 (TAVK…TAKA), 169–206 (LRMP…TIDN), 208–244 (DIEK…EVTM), 245–282 (ATLS…LVED), and 288–326 (PFMD…VGAV). ADP contacts are provided by threonine 395, histidine 399, and glutamate 400. ABC transporter domains follow at residues 429–646 (DEGE…YYEL) and 672–998 (VKVS…KKDD). Residues asparagine 708, glutamate 927, asparagine 930, and histidine 956 each coordinate ADP. A disordered region spans residues 980-1050 (GHNWVQGQGS…DAYVSSDEEF (71 aa)). Residues 1013 to 1037 (AAKKKKKLSSAELRKKKKERMKKKK) are compositionally biased toward basic residues.

Belongs to the ABC transporter superfamily. ABCF family. EF3 subfamily. As to quaternary structure, monomer.

The protein resides in the cytoplasm. It catalyses the reaction ATP + H2O = ADP + phosphate + H(+). The protein operates within protein biosynthesis; polypeptide chain elongation. In terms of biological role, ribosome-dependent ATPase that functions in cytoplasmic translation elongation. Required for the ATP-dependent release of deacylated tRNA from the ribosomal E-site during protein biosynthesis. Stimulates the eEF1A-dependent binding of aminoacyl-tRNA to the ribosomal A-site, which has reduced affinity for tRNA as long as the E-site is occupied. Assists translation termination by stimulating the release of nascent protein from the ribosome by release factors. This Candida albicans (strain SC5314 / ATCC MYA-2876) (Yeast) protein is Elongation factor 3 (CEF3).